Consider the following 569-residue polypeptide: Lysine--tRNA ligase (569 aa).

Positions 414 and 421 each coordinate Mg(2+).

It belongs to the class-II aminoacyl-tRNA synthetase family. In terms of assembly, homodimer. Mg(2+) serves as cofactor.

Its subcellular location is the cytoplasm. It carries out the reaction tRNA(Lys) + L-lysine + ATP = L-lysyl-tRNA(Lys) + AMP + diphosphate. In Christiangramia forsetii (strain DSM 17595 / CGMCC 1.15422 / KT0803) (Gramella forsetii), this protein is Lysine--tRNA ligase.